The sequence spans 227 residues: Isopentenyl-diphosphate Delta-isomerase 1 (227 aa).

Lysine 36 contacts substrate. 2 residues coordinate Mg(2+): histidine 40 and histidine 51. The Nudix hydrolase domain occupies 49–199 (LLHRAFSVFL…EIKITPWFKI (151 aa)). Substrate-binding residues include arginine 70 and lysine 74. Cysteine 86 is a catalytic residue. Serine 87 is a binding site for substrate. The Mg(2+) site is built by glutamate 146 and glutamate 148. Glutamate 148 is a catalytic residue. At lysine 176 the chain carries N6-acetyllysine. The short motif at 225 to 227 (YRI) is the Microbody targeting signal element.

This sequence belongs to the IPP isomerase type 1 family. Monomer. Mg(2+) is required as a cofactor.

It is found in the peroxisome. It carries out the reaction isopentenyl diphosphate = dimethylallyl diphosphate. Its pathway is isoprenoid biosynthesis; dimethylallyl diphosphate biosynthesis; dimethylallyl diphosphate from isopentenyl diphosphate: step 1/1. Functionally, catalyzes the 1,3-allylic rearrangement of the homoallylic substrate isopentenyl (IPP) to its highly electrophilic allylic isomer, dimethylallyl diphosphate (DMAPP). This chain is Isopentenyl-diphosphate Delta-isomerase 1 (IDI1), found in Pongo abelii (Sumatran orangutan).